Consider the following 261-residue polypeptide: Spermatogenesis-associated protein 46 (261 aa).

The tract at residues 140 to 159 (SSSSSPENTCPREATKKSRH) is disordered.

In terms of tissue distribution, testis-specific.

The protein resides in the nucleus membrane. Its function is as follows. Plays a role in spermiogenesis and fertilization. In Homo sapiens (Human), this protein is Spermatogenesis-associated protein 46.